Reading from the N-terminus, the 1796-residue chain is Non-reducing polyketide synthase nscA (1796 aa).

The segment at 18–256 is N-terminal acylcarrier protein transacylase domain (SAT); it reads DDLKDLFRRL…PLPVYDGLCH (239 aa). The region spanning 392-825 is the Ketosynthase family 3 (KS3) domain; it reads SSKLAIVGMA…GGNTTLLLED (434 aa). Residues Cys-565, His-700, and His-743 each act as for beta-ketoacyl synthase activity in the active site. A malonyl-CoA:ACP transacylase (MAT) domain region spans residues 931-1251; the sequence is FTGQGAYYSG…SLVTLHLAGL (321 aa). Residues 1317 to 1636 are product template (PT) domain; it reads TSLVHQITAE…RLLMDRFFSP (320 aa). Residues 1321–1457 are N-terminal hotdog fold; sequence HQITAETVEA…ATVRFEDPVA (137 aa). In terms of domain architecture, PKS/mFAS DH spans 1321 to 1631; it reads HQITAETVEA…FRRVPRLLMD (311 aa). His-1353 acts as the Proton acceptor; for dehydratase activity in catalysis. A C-terminal hotdog fold region spans residues 1485 to 1631; the sequence is ASRLSKPLAY…FRRVPRLLMD (147 aa). Residue Asp-1542 is the Proton donor; for dehydratase activity of the active site. Residues 1688–1720 are disordered; sequence TPESTPPLAPSSESSTPKESPIATPPESERADP. Positions 1697–1708 are enriched in low complexity; sequence PSSESSTPKESP. In terms of domain architecture, Carrier spans 1719–1796; that stretch reads DPMDNMVSQC…EMTAWIEEYC (78 aa). Ser-1756 is modified (O-(pantetheine 4'-phosphoryl)serine).

Requires pantetheine 4'-phosphate as cofactor.

The protein operates within secondary metabolite biosynthesis. Non-reducing polyketide synthase; part of the gene cluster that mediates the biosynthesis of neosartoricin B, a prenylated anthracenone that probably exhibits T-cell antiproliferative activity, suggestive of a physiological role as an immunosuppressive agent. The non-reducing polyketide synthase nscA probably synthesizes and cyclizes the decaketide backbone. The hydrolase nscB then mediates the product release through hydrolysis followed by spontaneous decarboxylation. The prenyltransferase nscD catalyzes the addition of the dimethylallyl group to the aromatic C5. The FAD-dependent monooxygenase nscC is then responsible for the stereospecific hydroxylation at C2. Neosartoricin B can be converted into two additional compounds neosartoricins C and D. Neosartoricin C is a spirocyclic compound that is cyclized through the attack of C3 hydroxyl on C14, followed by dehydration. On the other hand, neosartoricin D is a further cyclized compound in which attack of C2 on C14 in neosartoricin C results in the formation of the acetal-containing dioxabicyclo-octanone ring. Both of these compounds are novel and possibly represent related metabolites of the gene cluster. This Arthroderma otae (strain ATCC MYA-4605 / CBS 113480) (Microsporum canis) protein is Non-reducing polyketide synthase nscA.